Reading from the N-terminus, the 184-residue chain is Ribosome-recycling factor (184 aa).

Belongs to the RRF family.

The protein resides in the cytoplasm. Responsible for the release of ribosomes from messenger RNA at the termination of protein biosynthesis. May increase the efficiency of translation by recycling ribosomes from one round of translation to another. This Acinetobacter baumannii (strain SDF) protein is Ribosome-recycling factor.